A 391-amino-acid chain; its full sequence is Suppressor APC domain-containing protein 2 (391 aa).

The disordered stretch occupies residues 1 to 20; the sequence is MAVAAMAERGRLSHAAPAPS. Thr218 is modified (phosphothreonine). Residues 226 to 277 adopt a coiled-coil conformation; it reads SLLKQMKELDQEQEVLLQGLEMMARGRDWYQQQLQRVQERQRRLSQSRAAAD. Ser283 bears the Phosphoserine mark. Residues 340 to 381 are a coiled coil; it reads LKEQNRLLTQEVTDKSERITQLEQEKSALIKQLFEARALSQQ.

Interacts with a spindle orientation complex at least composed of GNAI1, GPSM2 and NUMA1. Interacts with GPSM2 (via TPR motifs); this interaction is required to prevent GPSM2 anchoring at the mitotic apical cortex and is inhibited in presence of NUMA1 in a dose dependent manner. Interacts with PARD3. In terms of tissue distribution, expressed in the retina. Expressed in retinal progenitor cells and newly differentiated neurons but not in mature retinal cells (at protein level).

The protein resides in the cytoplasm. It is found in the nucleus. Its subcellular location is the cell cortex. It localises to the apical cell membrane. The protein localises to the cell junction. The protein resides in the tight junction. Plays a role in planar mitotic spindle orientation in retinal progenitor cells (RPCs) and promotes the production of symmetric terminal divisions. Negatively regulates the mitotic apical cortex localization of GPSM2. Involved also in positive regulation of cell proliferation and tumor cell growth. This chain is Suppressor APC domain-containing protein 2, found in Mus musculus (Mouse).